Reading from the N-terminus, the 152-residue chain is Large ribosomal subunit protein bL9 (152 aa).

The protein belongs to the bacterial ribosomal protein bL9 family.

In terms of biological role, binds to the 23S rRNA. This chain is Large ribosomal subunit protein bL9, found in Synechococcus elongatus (strain ATCC 33912 / PCC 7942 / FACHB-805) (Anacystis nidulans R2).